The primary structure comprises 336 residues: Dihydroorotate dehydrogenase (quinone) (336 aa).

Residues 62–66 (AGLDK) and Thr86 contribute to the FMN site. Lys66 is a substrate binding site. 111–115 (NRMGF) is a binding site for substrate. Residues Asn139 and Asn172 each contribute to the FMN site. Asn172 lines the substrate pocket. The active-site Nucleophile is the Ser175. A substrate-binding site is contributed by Asn177. FMN contacts are provided by Lys217 and Thr245. 246-247 (NT) contacts substrate. FMN contacts are provided by residues Gly268, Gly297, and 318-319 (YS).

The protein belongs to the dihydroorotate dehydrogenase family. Type 2 subfamily. As to quaternary structure, monomer. It depends on FMN as a cofactor.

It is found in the cell membrane. It catalyses the reaction (S)-dihydroorotate + a quinone = orotate + a quinol. The protein operates within pyrimidine metabolism; UMP biosynthesis via de novo pathway; orotate from (S)-dihydroorotate (quinone route): step 1/1. Functionally, catalyzes the conversion of dihydroorotate to orotate with quinone as electron acceptor. This chain is Dihydroorotate dehydrogenase (quinone), found in Vibrio vulnificus (strain CMCP6).